Reading from the N-terminus, the 280-residue chain is Formamidopyrimidine-DNA glycosylase (280 aa).

The active-site Schiff-base intermediate with DNA is Pro2. Glu3 acts as the Proton donor in catalysis. The active-site Proton donor; for beta-elimination activity is the Lys58. 3 residues coordinate DNA: His91, Arg110, and Arg152. The segment at 237 to 271 (NVYGRENLPCPQCDSAIEKVVLNQRAAYFCSNCQK) adopts an FPG-type zinc-finger fold. The Proton donor; for delta-elimination activity role is filled by Arg261.

The protein belongs to the FPG family. Monomer. It depends on Zn(2+) as a cofactor.

It catalyses the reaction Hydrolysis of DNA containing ring-opened 7-methylguanine residues, releasing 2,6-diamino-4-hydroxy-5-(N-methyl)formamidopyrimidine.. The catalysed reaction is 2'-deoxyribonucleotide-(2'-deoxyribose 5'-phosphate)-2'-deoxyribonucleotide-DNA = a 3'-end 2'-deoxyribonucleotide-(2,3-dehydro-2,3-deoxyribose 5'-phosphate)-DNA + a 5'-end 5'-phospho-2'-deoxyribonucleoside-DNA + H(+). In terms of biological role, involved in base excision repair of DNA damaged by oxidation or by mutagenic agents. Acts as a DNA glycosylase that recognizes and removes damaged bases. Has a preference for oxidized purines, such as 7,8-dihydro-8-oxoguanine (8-oxoG). Has AP (apurinic/apyrimidinic) lyase activity and introduces nicks in the DNA strand. Cleaves the DNA backbone by beta-delta elimination to generate a single-strand break at the site of the removed base with both 3'- and 5'-phosphates. The protein is Formamidopyrimidine-DNA glycosylase of Hydrogenovibrio crunogenus (strain DSM 25203 / XCL-2) (Thiomicrospira crunogena).